The sequence spans 233 residues: Fibrillarin-like rRNA/tRNA 2'-O-methyltransferase (233 aa).

S-adenosyl-L-methionine contacts are provided by residues 90–91 (TT), 109–110 (EF), 134–135 (DA), and 154–157 (DVAQ).

It belongs to the methyltransferase superfamily. Fibrillarin family. In terms of assembly, interacts with nop5. Component of box C/D small ribonucleoprotein (sRNP) particles that contain rpl7ae, FlpA and nop5, plus a guide RNA.

Functionally, involved in pre-rRNA and tRNA processing. Utilizes the methyl donor S-adenosyl-L-methionine to catalyze the site-specific 2'-hydroxyl methylation of ribose moieties in rRNA and tRNA. Site specificity is provided by a guide RNA that base pairs with the substrate. Methylation occurs at a characteristic distance from the sequence involved in base pairing with the guide RNA. The polypeptide is Fibrillarin-like rRNA/tRNA 2'-O-methyltransferase (Aeropyrum pernix (strain ATCC 700893 / DSM 11879 / JCM 9820 / NBRC 100138 / K1)).